A 227-amino-acid polypeptide reads, in one-letter code: Probable methylthioribulose-1-phosphate dehydratase (227 aa).

C87 provides a ligand contact to substrate. Zn(2+) contacts are provided by H105 and H107. E129 functions as the Proton donor/acceptor in the catalytic mechanism. H185 is a Zn(2+) binding site.

Belongs to the aldolase class II family. MtnB subfamily. Zn(2+) serves as cofactor.

Its subcellular location is the cytoplasm. It carries out the reaction 5-(methylsulfanyl)-D-ribulose 1-phosphate = 5-methylsulfanyl-2,3-dioxopentyl phosphate + H2O. It participates in amino-acid biosynthesis; L-methionine biosynthesis via salvage pathway; L-methionine from S-methyl-5-thio-alpha-D-ribose 1-phosphate: step 2/6. Catalyzes the dehydration of methylthioribulose-1-phosphate (MTRu-1-P) into 2,3-diketo-5-methylthiopentyl-1-phosphate (DK-MTP-1-P). The sequence is that of Probable methylthioribulose-1-phosphate dehydratase from Drosophila melanogaster (Fruit fly).